The primary structure comprises 741 residues: Double-stranded RNA-specific editase 1 (741 aa).

A disordered region spans residues 1–79 (MDIEDEENMS…RRKTPGPVLP (79 aa)). S26 carries the phosphoserine modification. Positions 33–49 (PGPGEGSQLSNGGGGGP) are enriched in gly residues. Positions 63–73 (SKYRLKKRRKT) are enriched in basic residues. One can recognise a DRBM 1 domain in the interval 78-144 (LPKNALMQLN…AEKALRSFVQ (67 aa)). Interaction with substrate RNA stretches follow at residues 83–88 (LMQLNE) and 104–105 (VH). Phosphoserine is present on S149. One can recognise a DRBM 2 domain in the interval 231 to 298 (PSGKNPVMIL…AQSALAAIFN (68 aa)). 2 interaction with substrate RNA regions span residues 237–242 (VMILNE) and H259. The 368-residue stretch at 370–737 (SVSTGTKCIN…VEKPTEQDQF (368 aa)) folds into the A to I editase domain. H394 is a Zn(2+) binding site. E396 (proton donor) is an active-site residue. Residues R400 and R401 each contribute to the 1D-myo-inositol hexakisphosphate site. C451 contributes to the Zn(2+) binding site. Residues 486 to 518 (RPPGLLSDPSTSTFQGAGTTEPADRHPNRKARG) are disordered. Positions 493 to 503 (DPSTSTFQGAG) are enriched in polar residues. Zn(2+) is bound at residue C556. Residues K559, R562, K669, K702, K712, and K730 each contribute to the 1D-myo-inositol hexakisphosphate site.

Homodimer. Homodimerization is essential for its catalytic activity. Can form heterodimers with isoform 5 of ADAR/ADAR1. It depends on 1D-myo-inositol hexakisphosphate as a cofactor. In terms of tissue distribution, highly expressed in brain and heart and at lower levels in placenta. Fair expression in lung, liver and kidney. Detected in brain, heart, kidney, lung and liver (at protein level). Highly expressed in hippocampus and colon. Expressed in pediatric astrocytomas and the protein has a decreased RNA-editing activity. The decrease in RNA editing correlates with the grade of malignancy of the tumors, with the high grade tumors showing lower editing is seen.

The protein resides in the nucleus. It is found in the nucleolus. The enzyme catalyses adenosine in double-stranded RNA + H2O + H(+) = inosine in double-stranded RNA + NH4(+). In terms of biological role, catalyzes the hydrolytic deamination of adenosine to inosine in double-stranded RNA (dsRNA) referred to as A-to-I RNA editing. This may affect gene expression and function in a number of ways that include mRNA translation by changing codons and hence the amino acid sequence of proteins; pre-mRNA splicing by altering splice site recognition sequences; RNA stability by changing sequences involved in nuclease recognition; genetic stability in the case of RNA virus genomes by changing sequences during viral RNA replication; and RNA structure-dependent activities such as microRNA production or targeting or protein-RNA interactions. Can edit both viral and cellular RNAs and can edit RNAs at multiple sites (hyper-editing) or at specific sites (site-specific editing). Its cellular RNA substrates include: bladder cancer-associated protein (BLCAP), neurotransmitter receptors for glutamate (GRIA2 and GRIK2) and serotonin (HTR2C), GABA receptor (GABRA3) and potassium voltage-gated channel (KCNA1). Site-specific RNA editing of transcripts encoding these proteins results in amino acid substitutions which consequently alter their functional activities. Edits GRIA2 at both the Q/R and R/G sites efficiently but converts the adenosine in hotspot1 much less efficiently. Can exert a proviral effect towards human immunodeficiency virus type 1 (HIV-1) and enhances its replication via both an editing-dependent and editing-independent mechanism. The former involves editing of adenosines in the 5'UTR while the latter occurs via suppression of EIF2AK2/PKR activation and function. Can inhibit cell proliferation and migration and can stimulate exocytosis. Its function is as follows. Has a lower catalytic activity than isoform 2. Has a higher catalytic activity than isoform 1. The polypeptide is Double-stranded RNA-specific editase 1 (Homo sapiens (Human)).